The chain runs to 310 residues: Aminoacyl tRNA synthase complex-interacting multifunctional protein 1 (310 aa).

A2 carries the post-translational modification N-acetylalanine. The tract at residues 6–46 (AVLKRLEQKGAEADQIIEYLKQQVALLKEKAILQATMREEK) is required for fibroblast proliferation. Positions 54 to 192 (KLKKEIEELK…APRTVVSGLV (139 aa)) are interaction with HSP90B1. Residues 92 to 110 (ASESVVQSPSVATTASPAT) show a composition bias toward polar residues. The interval 92 to 147 (ASESVVQSPSVATTASPATKEQIKAGEEKKVKEKTEKKGEKKEKQQSAAASTDSKP) is disordered. The interval 101–115 (SVATTASPATKEQIK) is required for endothelial cell death. Positions 112–136 (EQIKAGEEKKVKEKTEKKGEKKEKQ) are enriched in basic and acidic residues. A required for endothelial cell migration region spans residues 115–190 (KAGEEKKVKE…EAAPRTVVSG (76 aa)). S138 is modified (phosphoserine). Residues 149–250 (DASRLDLRIG…NGSVPGDRIT (102 aa)) form the tRNA-binding domain. K267 carries the post-translational modification N6-succinyllysine.

In terms of assembly, homodimer. Part of the multisynthetase complex (MSC), a multisubunit complex that groups tRNA ligases for Arg (RARS1), Asp (DARS1), Gln (QARS1), Ile (IARS1), Leu (LARS1), Lys (KARS1), Met (MARS1) the bifunctional ligase for Glu and Pro (EPRS1) and the auxiliary subunits AIMP1/p43, AIMP2/p38 and EEF1E1/p18. Interacts (via N-terminus) with RARS1 (via N-terminus). Part of a complex composed of RARS1, QARS1 and AIMP1. Interacts (via C-terminus) with SMURF2. Interacts (via N-terminus) with HSP90B1/gp96 (via C-terminus). Interacts with PSMA7. Interacts with TARS3. Post-translationally, cleaved by caspase-7 in response to apoptosis to produce EMAP-II. As to expression, highly expressed in salivary glands and pancreatic alpha cells in the adult (at protein level). In the embryo, expressed primarily at sites of tissue remodeling such as ganglia, developing bones and teeth.

Its subcellular location is the nucleus. It is found in the cytoplasm. It localises to the cytosol. The protein localises to the secreted. The protein resides in the endoplasmic reticulum. Its subcellular location is the golgi apparatus. In terms of biological role, non-catalytic component of the multisynthase complex. Stimulates the catalytic activity of cytoplasmic arginyl-tRNA synthase. Binds tRNA. Possesses inflammatory cytokine activity. Negatively regulates TGF-beta signaling through stabilization of SMURF2 by binding to SMURF2 and inhibiting its SMAD7-mediated degradation. Involved in glucose homeostasis through induction of glucagon secretion at low glucose levels. Promotes dermal fibroblast proliferation and wound repair. Regulates KDELR1-mediated retention of HSP90B1/gp96 in the endoplasmic reticulum. Plays a role in angiogenesis by inducing endothelial cell migration at low concentrations and endothelian cell apoptosis at high concentrations. Induces maturation of dendritic cells and monocyte cell adhesion. Modulates endothelial cell responses by degrading HIF-1A through interaction with PSMA7. The sequence is that of Aminoacyl tRNA synthase complex-interacting multifunctional protein 1 (Aimp1) from Mus musculus (Mouse).